A 299-amino-acid polypeptide reads, in one-letter code: MLPADQAGIPPCQGPRARSAPISFAIPKGAWDTHLHVFGPTAVFPYAEKRPYTPPDSPLEDYLALMERLGIERGVCVHPNVHGIDNSVTIDAVERSDRRLLGIIKPHRVMTFTELRDLKTRGVRGVRFAFNPQHGSGALDTELFERMHGWCRELDWCINMHFAPDALEGLCDLIAGAETPIIIDHFGRVETAAGVNQLPFKILRDLATLDHVWIKLTGADRISHSGVPYDDVVPFAHALSEIAPDRLLWGSDWPHSGYFDPKRMPDDGDLLNLVARFAPDVALRHKILVDNPARLFGVI.

The protein belongs to the metallo-dependent hydrolases superfamily. Sulfomuconolactone hydrolase family. In terms of assembly, monomer. Zn(2+) serves as cofactor.

The enzyme catalyses 4-sulfomuconolactone + H2O = maleylacetate + sulfite + 2 H(+). Its function is as follows. Involved in the degradation of 4-sulfocatechol which is a central intermediate in the degradation of substituted sulfonated benzenes. Catalyzes the hydrolytical desulfonation of 4-sulfomuconolactone to yield maleylacetate. This chain is 4-sulfomuconolactone hydrolase, found in Rhizobium radiobacter (Agrobacterium tumefaciens).